The chain runs to 156 residues: Arginine repressor (156 aa).

It belongs to the ArgR family.

Its subcellular location is the cytoplasm. The protein operates within amino-acid biosynthesis; L-arginine biosynthesis [regulation]. Functionally, regulates arginine biosynthesis genes. In Citrobacter koseri (strain ATCC BAA-895 / CDC 4225-83 / SGSC4696), this protein is Arginine repressor.